The primary structure comprises 571 residues: Proline--tRNA ligase (571 aa).

The protein belongs to the class-II aminoacyl-tRNA synthetase family. ProS type 1 subfamily. As to quaternary structure, homodimer.

The protein resides in the cytoplasm. The enzyme catalyses tRNA(Pro) + L-proline + ATP = L-prolyl-tRNA(Pro) + AMP + diphosphate. Its function is as follows. Catalyzes the attachment of proline to tRNA(Pro) in a two-step reaction: proline is first activated by ATP to form Pro-AMP and then transferred to the acceptor end of tRNA(Pro). As ProRS can inadvertently accommodate and process non-cognate amino acids such as alanine and cysteine, to avoid such errors it has two additional distinct editing activities against alanine. One activity is designated as 'pretransfer' editing and involves the tRNA(Pro)-independent hydrolysis of activated Ala-AMP. The other activity is designated 'posttransfer' editing and involves deacylation of mischarged Ala-tRNA(Pro). The misacylated Cys-tRNA(Pro) is not edited by ProRS. This is Proline--tRNA ligase from Haemophilus ducreyi (strain 35000HP / ATCC 700724).